Consider the following 488-residue polypeptide: Eukaryotic translation initiation factor 3 subunit L (488 aa).

Disordered regions lie at residues 1–34 (MSLP…YREQ) and 427–449 (SEGG…HGKE). Positions 7–16 (QNRDAARRAP) are enriched in basic and acidic residues. The segment covering 17 to 27 (DDDDDAEEETM) has biased composition (acidic residues). A PCI domain is found at 256-450 (DAIRMFSHIL…RSRLRHGKEI (195 aa)). Over residues 431 to 440 (LLERRGDPQQ) the composition is skewed to basic and acidic residues.

It belongs to the eIF-3 subunit L family. As to quaternary structure, component of the eukaryotic translation initiation factor 3 (eIF-3) complex.

The protein localises to the cytoplasm. Component of the eukaryotic translation initiation factor 3 (eIF-3) complex, which is involved in protein synthesis of a specialized repertoire of mRNAs and, together with other initiation factors, stimulates binding of mRNA and methionyl-tRNAi to the 40S ribosome. The eIF-3 complex specifically targets and initiates translation of a subset of mRNAs involved in cell proliferation. In Phaeosphaeria nodorum (strain SN15 / ATCC MYA-4574 / FGSC 10173) (Glume blotch fungus), this protein is Eukaryotic translation initiation factor 3 subunit L.